The primary structure comprises 392 residues: MPSNATDALAIAQDLLRCPSVTPADAGALGVLERLLHAAGFAVHRVTFSEPGTADIDNLYARIGTTAPHICFAGHTDVVPPGDEAAWSHDAFAGEVHDGLLYGRGAVDMKGGIACSVAAVLQHLATHGGQPHESGQGSISFLITGDEEDVAVNGTVKLLQWAAARGETFDHCVLGEPSNVEALGDTIKIGRRGSLSGTLIVDGVQGHVAYPHRASNPVPDIAALIVALGAEPLDAGTDTFQPSNLEFTSVDVGNPATNVIPAQARAKFNIRFNDRHSAESLQTLIEARVQAACGNRIRARIDWQPSNAGAFVTKPGAFTDLVAAAIEDVTGRKPELNTGGGTSDARFITHYCPVIEFGLVGQTMHKIDERTPVADLETLTQIYRGVLQRYFA.

His-75 lines the Zn(2+) pocket. Residue Asp-77 is part of the active site. Asp-108 contributes to the Zn(2+) binding site. The active-site Proton acceptor is the Glu-147. 3 residues coordinate Zn(2+): Glu-148, Glu-176, and His-365.

It belongs to the peptidase M20A family. DapE subfamily. In terms of assembly, homodimer. Requires Zn(2+) as cofactor. It depends on Co(2+) as a cofactor.

It catalyses the reaction N-succinyl-(2S,6S)-2,6-diaminopimelate + H2O = (2S,6S)-2,6-diaminopimelate + succinate. The protein operates within amino-acid biosynthesis; L-lysine biosynthesis via DAP pathway; LL-2,6-diaminopimelate from (S)-tetrahydrodipicolinate (succinylase route): step 3/3. Its function is as follows. Catalyzes the hydrolysis of N-succinyl-L,L-diaminopimelic acid (SDAP), forming succinate and LL-2,6-diaminopimelate (DAP), an intermediate involved in the bacterial biosynthesis of lysine and meso-diaminopimelic acid, an essential component of bacterial cell walls. The chain is Succinyl-diaminopimelate desuccinylase from Rhodopseudomonas palustris (strain BisB18).